The sequence spans 577 residues: Glucose-6-phosphate 1-dehydrogenase, chloroplastic (577 aa).

A disordered region spans residues Met1–Ser20. The transit peptide at Met1–Ser63 directs the protein to the chloroplast. Residues Ser11–Ser20 are compositionally biased toward low complexity. NADP(+) contacts are provided by residues Gly97 to Lys104 and Arg131. The cysteines at positions 149 and 157 are disulfide-linked. An NADP(+)-binding site is contributed by Lys234. Residues Lys234, His264–Lys268, Glu302, and Asp321 contribute to the D-glucose 6-phosphate site. His326 (proton acceptor) is an active-site residue. An NADP(+)-binding site is contributed by Lys419. The D-glucose 6-phosphate site is built by Lys422 and Lys427. 3 residues coordinate NADP(+): Arg428, Arg432, and Arg461. Residue Gln463 participates in D-glucose 6-phosphate binding. Residues Tyr469–Lys471 and Arg554 each bind NADP(+).

Belongs to the glucose-6-phosphate dehydrogenase family. In terms of assembly, homodimer. In terms of tissue distribution, green tissues, leaves and chloroplasts.

It localises to the plastid. The protein localises to the chloroplast. The catalysed reaction is D-glucose 6-phosphate + NADP(+) = 6-phospho-D-glucono-1,5-lactone + NADPH + H(+). It participates in carbohydrate degradation; pentose phosphate pathway; D-ribulose 5-phosphate from D-glucose 6-phosphate (oxidative stage): step 1/3. Regulated by metabolites. Post-translationally inactivated by cysteine-mediated redox modification via the ferredoxin-thioredoxin system in the light and this avoids futile cycles with photosynthetic CO2 fixation. Its function is as follows. Catalyzes the rate-limiting step of the oxidative pentose-phosphate pathway, which represents a route for the dissimilation of carbohydrates besides glycolysis. The main function of this enzyme is to provide reducing power (NADPH) and pentose phosphates for fatty acid and nucleic acid synthesis which are involved in membrane synthesis and cell division. The polypeptide is Glucose-6-phosphate 1-dehydrogenase, chloroplastic (Solanum tuberosum (Potato)).